The sequence spans 157 residues: Endoribonuclease YbeY (157 aa).

Residues histidine 123, histidine 127, and histidine 133 each coordinate Zn(2+).

This sequence belongs to the endoribonuclease YbeY family. The cofactor is Zn(2+).

The protein resides in the cytoplasm. In terms of biological role, single strand-specific metallo-endoribonuclease involved in late-stage 70S ribosome quality control and in maturation of the 3' terminus of the 16S rRNA. The polypeptide is Endoribonuclease YbeY (Desulfitobacterium hafniense (strain Y51)).